The following is a 189-amino-acid chain: Parkinson disease protein 7 homolog (189 aa).

A2 is subject to N-acetylalanine; in Protein/nucleic acid deglycase DJ-1, N-terminally processed. S-palmitoyl cysteine attachment occurs at residues C46 and C53. Y67 is subject to Phosphotyrosine. C106 serves as the catalytic Nucleophile. At C106 the chain carries Cysteine sulfinic acid (-SO2H); alternate. C106 carries the S-palmitoyl cysteine; alternate lipid modification. The active site involves H126. Residue K130 forms a Glycyl lysine isopeptide (Lys-Gly) (interchain with G-Cter in SUMO) linkage. Position 148 is an N6-acetyllysine (K148). K182 is modified (N6-succinyllysine).

Belongs to the peptidase C56 family. Homodimer. Binds EFCAB6/DJBP and PIAS2. Part of a ternary complex containing PARK7, EFCAB6/DJBP and AR. Interacts (via N-terminus) with OTUD7B. Interacts with BBS1, HIPK1, CLCF1 and MTERF. Forms a complex with PINK1 and PRKN. Interacts (via C-terminus) with NCF1; the interaction is enhanced by LPS and modulates NCF1 phosphorylation and membrane translocation. Interacts with NENF. It depends on Deglycase activity does not require glutathione as a cofactor, however, glycated glutathione constitutes a PARK7 substrate. as a cofactor. In terms of processing, sumoylated on Lys-130 by PIAS2 or PIAS4; which is essential for cell-growth promoting activity and transforming activity. Undergoes cleavage of a C-terminal peptide and subsequent activation of protease activity in response to oxidative stress. Detected in liver, heart, spleen and testis (at protein level). Detected in liver, heart, spleen, kidney, epididymidis, vas deferens, sperm cells and testis.

It localises to the cell membrane. The protein resides in the cytoplasm. It is found in the nucleus. Its subcellular location is the membrane raft. The protein localises to the mitochondrion. It localises to the endoplasmic reticulum. It carries out the reaction N(omega)-(1-hydroxy-2-oxopropyl)-L-arginyl-[protein] + H2O = lactate + L-arginyl-[protein] + H(+). It catalyses the reaction N(6)-(1-hydroxy-2-oxopropyl)-L-lysyl-[protein] + H2O = lactate + L-lysyl-[protein] + H(+). The catalysed reaction is S-(1-hydroxy-2-oxopropyl)-L-cysteinyl-[protein] + H2O = lactate + L-cysteinyl-[protein] + H(+). The enzyme catalyses N(omega)-(1-hydroxy-2-oxoethyl)-L-arginyl-[protein] + H2O = L-arginyl-[protein] + glycolate + H(+). It carries out the reaction N(6)-(1-hydroxy-2-oxoethyl)-L-lysyl-[protein] + H2O = glycolate + L-lysyl-[protein] + H(+). It catalyses the reaction S-(1-hydroxy-2-oxoethyl)-L-cysteinyl-[protein] + H2O = glycolate + L-cysteinyl-[protein] + H(+). The catalysed reaction is N(2)-(1-hydroxy-2-oxopropyl)-dGTP + H2O = lactate + dGTP + H(+). The enzyme catalyses N(2)-(1-hydroxy-2-oxopropyl)-GTP + H2O = lactate + GTP + H(+). It carries out the reaction N(2)-(1-hydroxy-2-oxopropyl)-GDP + H2O = lactate + GDP + H(+). It catalyses the reaction N(2)-(1-hydroxy-2-oxopropyl)-GMP + H2O = lactate + GMP + H(+). The catalysed reaction is N(2)-(1-hydroxy-2-oxoethyl)-dGTP + H2O = dGTP + glycolate + H(+). The enzyme catalyses N(2)-(1-hydroxy-2-oxoethyl)-GTP + H2O = glycolate + GTP + H(+). It carries out the reaction N(2)-(1-hydroxy-2-oxoethyl)-GDP + H2O = glycolate + GDP + H(+). It catalyses the reaction N(2)-(1-hydroxy-2-oxoethyl)-GMP + H2O = glycolate + GMP + H(+). The catalysed reaction is an N(2)-(1-hydroxy-2-oxopropyl)-guanosine in RNA + H2O = a guanosine in RNA + lactate + H(+). The enzyme catalyses an N(2)-(1-hydroxy-2-oxopropyl)-2'-deoxyguanosine in DNA + H2O = a 2'-deoxyguanosine in DNA + lactate + H(+). It carries out the reaction an N(2)-(1-hydroxy-2-oxoethyl)-guanosine in RNA + H2O = a guanosine in RNA + glycolate + H(+). It catalyses the reaction an N(2)-(1-hydroxy-2-oxoethyl)-2'-deoxyguanosine in DNA + H2O = a 2'-deoxyguanosine in DNA + glycolate + H(+). Its function is as follows. Multifunctional protein with controversial molecular function which plays an important role in cell protection against oxidative stress and cell death acting as oxidative stress sensor and redox-sensitive chaperone and protease. It is involved in neuroprotective mechanisms like the stabilization of NFE2L2 and PINK1 proteins, male fertility as a positive regulator of androgen signaling pathway as well as cell growth and transformation through, for instance, the modulation of NF-kappa-B signaling pathway. Has been described as a protein and nucleotide deglycase that catalyzes the deglycation of the Maillard adducts formed between amino groups of proteins or nucleotides and reactive carbonyl groups of glyoxals. But this function is rebuted by other works. As a protein deglycase, repairs methylglyoxal- and glyoxal-glycated proteins, and releases repaired proteins and lactate or glycolate, respectively. Deglycates cysteine, arginine and lysine residues in proteins, and thus reactivates these proteins by reversing glycation by glyoxals. Acts on early glycation intermediates (hemithioacetals and aminocarbinols), preventing the formation of advanced glycation endproducts (AGE) that cause irreversible damage. Also functions as a nucleotide deglycase able to repair glycated guanine in the free nucleotide pool (GTP, GDP, GMP, dGTP) and in DNA and RNA. Is thus involved in a major nucleotide repair system named guanine glycation repair (GG repair), dedicated to reversing methylglyoxal and glyoxal damage via nucleotide sanitization and direct nucleic acid repair. Protects histones from adduction by methylglyoxal, controls the levels of methylglyoxal-derived argininine modifications on chromatin. Able to remove the glycations and restore histone 3, histone glycation disrupts both local and global chromatin architecture by altering histone-DNA interactions as well as histone acetylation and ubiquitination levels. Displays a very low glyoxalase activity that may reflect its deglycase activity. Eliminates hydrogen peroxide and protects cells against hydrogen peroxide-induced cell death. Required for correct mitochondrial morphology and function as well as for autophagy of dysfunctional mitochondria. Plays a role in regulating expression or stability of the mitochondrial uncoupling proteins SLC25A14 and SLC25A27 in dopaminergic neurons of the substantia nigra pars compacta and attenuates the oxidative stress induced by calcium entry into the neurons via L-type channels during pacemaking. Regulates astrocyte inflammatory responses, may modulate lipid rafts-dependent endocytosis in astrocytes and neuronal cells. In pancreatic islets, involved in the maintenance of mitochondrial reactive oxygen species (ROS) levels and glucose homeostasis in an age- and diet dependent manner. Protects pancreatic beta cells from cell death induced by inflammatory and cytotoxic setting. Binds to a number of mRNAs containing multiple copies of GG or CC motifs and partially inhibits their translation but dissociates following oxidative stress. Metal-binding protein able to bind copper as well as toxic mercury ions, enhances the cell protection mechanism against induced metal toxicity. In macrophages, interacts with the NADPH oxidase subunit NCF1 to direct NADPH oxidase-dependent ROS production, and protects against sepsis. The polypeptide is Parkinson disease protein 7 homolog (PARK7) (Mesocricetus auratus (Golden hamster)).